Here is a 506-residue protein sequence, read N- to C-terminus: Kynurenine 3-monooxygenase (506 aa).

Belongs to the aromatic-ring hydroxylase family. KMO subfamily. FAD serves as cofactor.

Its subcellular location is the mitochondrion outer membrane. It carries out the reaction L-kynurenine + NADPH + O2 + H(+) = 3-hydroxy-L-kynurenine + NADP(+) + H2O. Its pathway is cofactor biosynthesis; NAD(+) biosynthesis; quinolinate from L-kynurenine: step 1/3. In terms of biological role, catalyzes the hydroxylation of L-kynurenine (L-Kyn) to form 3-hydroxy-L-kynurenine (L-3OHKyn). Required for synthesis of quinolinic acid. The chain is Kynurenine 3-monooxygenase (bna4) from Emericella nidulans (strain FGSC A4 / ATCC 38163 / CBS 112.46 / NRRL 194 / M139) (Aspergillus nidulans).